The primary structure comprises 394 residues: Argininosuccinate synthase (394 aa).

8–16 (AYSGGLDTS) is a binding site for ATP. Positions 86 and 91 each coordinate L-citrulline. G116 is an ATP binding site. The L-aspartate site is built by T118, N122, and D123. N122 contacts L-citrulline. Residues R126, S172, S181, E257, and Y269 each coordinate L-citrulline.

Belongs to the argininosuccinate synthase family. Type 1 subfamily. Homotetramer.

The protein resides in the cytoplasm. It carries out the reaction L-citrulline + L-aspartate + ATP = 2-(N(omega)-L-arginino)succinate + AMP + diphosphate + H(+). Its pathway is amino-acid biosynthesis; L-arginine biosynthesis; L-arginine from L-ornithine and carbamoyl phosphate: step 2/3. This Methanosarcina acetivorans (strain ATCC 35395 / DSM 2834 / JCM 12185 / C2A) protein is Argininosuccinate synthase.